The primary structure comprises 154 residues: Ribonuclease H (154 aa).

The region spanning 1-142 is the RNase H type-1 domain; that stretch reads MTKHVEIFTD…CDELARTAAE (142 aa). Residues aspartate 10, glutamate 48, aspartate 70, and aspartate 134 each coordinate Mg(2+).

The protein belongs to the RNase H family. In terms of assembly, monomer. The cofactor is Mg(2+).

It localises to the cytoplasm. It catalyses the reaction Endonucleolytic cleavage to 5'-phosphomonoester.. Its function is as follows. Endonuclease that specifically degrades the RNA of RNA-DNA hybrids. This chain is Ribonuclease H, found in Vibrio campbellii (strain ATCC BAA-1116).